The primary structure comprises 273 residues: Proteasome subunit beta type-7-A (273 aa).

Residues 1–37 (MSQSTVDVPPKGGFSFDLCKRNDMLTQKGLKAPSFLK) constitute a propeptide, removed in mature form. The Nucleophile role is filled by Thr40.

The protein belongs to the peptidase T1B family. Component of the 20S core complex of the 26S proteasome. The 26S proteasome is composed of a core protease (CP), known as the 20S proteasome, capped at one or both ends by the 19S regulatory particle (RP/PA700). The 20S proteasome core is composed of 28 subunits that are arranged in four stacked rings, resulting in a barrel-shaped structure. The two end rings are each formed by seven alpha subunits, and the two central rings are each formed by seven beta subunits. The catalytic chamber with the active sites is on the inside of the barrel.

The protein resides in the cytoplasm. Its subcellular location is the nucleus. It carries out the reaction Cleavage of peptide bonds with very broad specificity.. Its function is as follows. The proteasome is a multicatalytic proteinase complex which is characterized by its ability to cleave peptides with Arg, Phe, Tyr, Leu, and Glu adjacent to the leaving group at neutral or slightly basic pH. The proteasome has an ATP-dependent proteolytic activity. This is Proteasome subunit beta type-7-A (PBB1) from Arabidopsis thaliana (Mouse-ear cress).